The chain runs to 342 residues: Zinc transporter ZIP11 (342 aa).

Transmembrane regions (helical) follow at residues 12–32, 44–64, 72–92, 194–214, 263–285, 290–307, and 322–342; these read LLGTFFTWAMTAAGAALVFIF, LGFAAGVMLAASYWSLLAPAV, GFGAFAFFPVAVGFTLGAAFV, IALLILAITIHNIPEGLAVGV, FWYGQLSGMVEPLAGVFGAFAVV, ILPYALAFAAGAMVYVVM, and LASWASILGFVVMMSLDVGLG.

Belongs to the ZIP transporter (TC 2.A.5) family. Highly expressed in the testes and portions of the digestive system including the stomach, ileum and cecum. In contrast, expressed at very low levels in liver, duodenum, jejunum, and colon.

The protein resides in the cell membrane. It localises to the nucleus. Its subcellular location is the cytoplasm. It is found in the golgi apparatus. It catalyses the reaction Zn(2+)(in) = Zn(2+)(out). It carries out the reaction Cu(2+)(in) = Cu(2+)(out). Its function is as follows. Zinc importer that regulates cytosolic zinc concentration either via zinc influx from the extracellular compartment or efflux from intracellular organelles such as Golgi apparatus. May transport copper ions as well. The transport mechanism remains to be elucidated. This Mus musculus (Mouse) protein is Zinc transporter ZIP11 (Slc39a11).